The primary structure comprises 212 residues: 3,4-dihydroxy-2-butanone 4-phosphate synthase (212 aa).

D-ribulose 5-phosphate is bound by residues 37–38, aspartate 42, 150–154, and glutamate 174; these read RE and RRGHT. Position 38 (glutamate 38) interacts with Mg(2+). Histidine 153 provides a ligand contact to Mg(2+).

Belongs to the DHBP synthase family. In terms of assembly, homodimer. The cofactor is Mg(2+). Requires Mn(2+) as cofactor.

It carries out the reaction D-ribulose 5-phosphate = (2S)-2-hydroxy-3-oxobutyl phosphate + formate + H(+). It participates in cofactor biosynthesis; riboflavin biosynthesis; 2-hydroxy-3-oxobutyl phosphate from D-ribulose 5-phosphate: step 1/1. Its function is as follows. Catalyzes the conversion of D-ribulose 5-phosphate to formate and 3,4-dihydroxy-2-butanone 4-phosphate. The polypeptide is 3,4-dihydroxy-2-butanone 4-phosphate synthase (Shewanella pealeana (strain ATCC 700345 / ANG-SQ1)).